The following is a 157-amino-acid chain: RNA pyrophosphohydrolase (157 aa).

Residues serine 6–aspartate 149 enclose the Nudix hydrolase domain. Positions glycine 43–glycine 64 match the Nudix box motif.

The protein belongs to the Nudix hydrolase family. RppH subfamily. A divalent metal cation serves as cofactor.

In terms of biological role, accelerates the degradation of transcripts by removing pyrophosphate from the 5'-end of triphosphorylated RNA, leading to a more labile monophosphorylated state that can stimulate subsequent ribonuclease cleavage. This is RNA pyrophosphohydrolase from Sulfurovum sp. (strain NBC37-1).